The primary structure comprises 171 residues: Ribosome maturation factor RimP (171 aa).

This sequence belongs to the RimP family.

The protein resides in the cytoplasm. Its function is as follows. Required for maturation of 30S ribosomal subunits. In Anaeromyxobacter dehalogenans (strain 2CP-1 / ATCC BAA-258), this protein is Ribosome maturation factor RimP.